An 89-amino-acid chain; its full sequence is MAKGQSLQEPFLNALRKEKVPVSIYLVNGIKLQGQIESFDQFVILLRNNVNQMVYKHAISTVVPARNVRTAPPVPTETHAQSSEEFGNI.

A Sm domain is found at 9-68 (EPFLNALRKEKVPVSIYLVNGIKLQGQIESFDQFVILLRNNVNQMVYKHAISTVVPARNV). The segment at 70-89 (TAPPVPTETHAQSSEEFGNI) is disordered. The span at 78–89 (THAQSSEEFGNI) shows a compositional bias: polar residues.

The protein belongs to the Hfq family. Homohexamer.

In terms of biological role, RNA chaperone that binds small regulatory RNA (sRNAs) and mRNAs to facilitate mRNA translational regulation in response to envelope stress, environmental stress and changes in metabolite concentrations. Also binds with high specificity to tRNAs. The polypeptide is RNA-binding protein Hfq (Alkalilimnicola ehrlichii (strain ATCC BAA-1101 / DSM 17681 / MLHE-1)).